A 110-amino-acid polypeptide reads, in one-letter code: Prothymosin alpha (110 aa).

Methionine 1 bears the N-acetylmethionine mark. A disordered region spans residues 1-110 (MSDAAVDTSS…TKKQKTDEDD (110 aa)). An N-acetylserine; in Prothymosin alpha, N-terminally processed modification is found at serine 2. A Phosphoserine modification is found at serine 2. Threonine 8 carries the phosphothreonine modification. Residues serine 9 and serine 10 each carry the phosphoserine modification. A phosphothreonine mark is found at threonine 13 and threonine 14. The span at 13 to 31 (TTKDLKEKKEVVEEAENGR) shows a compositional bias: basic and acidic residues. Lysine 15 is subject to N6-acetyllysine; alternate. Lysine 15 carries the post-translational modification N6-succinyllysine; alternate. Residues 42–83 (ENGEQEADNEVDEEEEEGGEEEEEEEEGDGEEEDGDEDEEAE) show a composition bias toward acidic residues. Basic and acidic residues predominate over residues 100 to 110 (DTKKQKTDEDD). Threonine 101 is subject to Phosphothreonine. The residue at position 102 (lysine 102) is an N6-acetyllysine; alternate. Lysine 102 is covalently cross-linked (Glycyl lysine isopeptide (Lys-Gly) (interchain with G-Cter in SUMO2); alternate). Phosphothreonine is present on threonine 106.

It belongs to the pro/parathymosin family. Interacts with NUPR1; regulates apoptotic process. Post-translationally, covalently linked to a small RNA of about 20 nucleotides.

Its subcellular location is the nucleus. In terms of biological role, prothymosin alpha may mediate immune function by conferring resistance to certain opportunistic infections. This is Prothymosin alpha (PTMA) from Pongo abelii (Sumatran orangutan).